Consider the following 176-residue polypeptide: Shikimate kinase (176 aa).

12–17 (GSGKST) contributes to the ATP binding site. Serine 16 contributes to the Mg(2+) binding site. 3 residues coordinate substrate: aspartate 34, arginine 58, and glycine 80. Arginine 117 contacts ATP. Residue arginine 136 participates in substrate binding. Arginine 153 is an ATP binding site.

This sequence belongs to the shikimate kinase family. As to quaternary structure, monomer. Requires Mg(2+) as cofactor.

It is found in the cytoplasm. It carries out the reaction shikimate + ATP = 3-phosphoshikimate + ADP + H(+). It participates in metabolic intermediate biosynthesis; chorismate biosynthesis; chorismate from D-erythrose 4-phosphate and phosphoenolpyruvate: step 5/7. In terms of biological role, catalyzes the specific phosphorylation of the 3-hydroxyl group of shikimic acid using ATP as a cosubstrate. This Mycobacterium avium (strain 104) protein is Shikimate kinase.